Reading from the N-terminus, the 77-residue chain is DNA-directed RNA polymerase subunit epsilon (77 aa).

It belongs to the RNA polymerase subunit epsilon family. RNAP is composed of a core of 2 alpha, a beta and a beta' subunit. The core is associated with a delta subunit, and at least one of epsilon or omega. When a sigma factor is associated with the core the holoenzyme is formed, which can initiate transcription.

The enzyme catalyses RNA(n) + a ribonucleoside 5'-triphosphate = RNA(n+1) + diphosphate. A non-essential component of RNA polymerase (RNAP). The chain is DNA-directed RNA polymerase subunit epsilon from Streptococcus pneumoniae serotype 2 (strain D39 / NCTC 7466).